A 415-amino-acid chain; its full sequence is 26S proteasome regulatory subunit 6B (415 aa).

203-210 (GPPGCGKT) is a binding site for ATP.

It belongs to the AAA ATPase family.

It is found in the cytoplasm. The protein resides in the nucleus. In terms of biological role, the 26S proteasome is involved in the ATP-dependent degradation of ubiquitinated proteins. The regulatory (or ATPase) complex confers ATP dependency and substrate specificity to the 26S complex. This Manduca sexta (Tobacco hawkmoth) protein is 26S proteasome regulatory subunit 6B.